A 280-amino-acid polypeptide reads, in one-letter code: Cobalt import ATP-binding protein CbiO (280 aa).

One can recognise an ABC transporter domain in the interval 2–236 (IEVRDLRFHY…GDWLRQQGLG (235 aa)). Residue 36–43 (GANGCGKT) coordinates ATP.

Belongs to the ABC transporter superfamily. Cobalt importer (TC 3.A.1.18.1) family. In terms of assembly, forms an energy-coupling factor (ECF) transporter complex composed of an ATP-binding protein (A component, CbiO), a transmembrane protein (T component, CbiQ) and 2 possible substrate-capture proteins (S components, CbiM and CbiN) of unknown stoichimetry.

Its subcellular location is the cell inner membrane. Its pathway is cofactor biosynthesis; adenosylcobalamin biosynthesis. Functionally, part of the energy-coupling factor (ECF) transporter complex CbiMNOQ involved in cobalt import. Presumably responsible for energy coupling to the transport system. The chain is Cobalt import ATP-binding protein CbiO from Syntrophus aciditrophicus (strain SB).